The following is a 260-amino-acid chain: tRNA pseudouridine synthase C (260 aa).

Residue D54 is part of the active site.

This sequence belongs to the pseudouridine synthase RluA family.

It catalyses the reaction uridine(65) in tRNA = pseudouridine(65) in tRNA. Responsible for synthesis of pseudouridine from uracil-65 in transfer RNAs. This is tRNA pseudouridine synthase C (truC) from Escherichia coli (strain K12).